Reading from the N-terminus, the 294-residue chain is tRNA pseudouridine synthase B (294 aa).

Aspartate 39 acts as the Nucleophile in catalysis.

This sequence belongs to the pseudouridine synthase TruB family. Type 1 subfamily.

It carries out the reaction uridine(55) in tRNA = pseudouridine(55) in tRNA. In terms of biological role, responsible for synthesis of pseudouridine from uracil-55 in the psi GC loop of transfer RNAs. This chain is tRNA pseudouridine synthase B, found in Streptococcus pyogenes serotype M2 (strain MGAS10270).